We begin with the raw amino-acid sequence, 1279 residues long: Amylopullulanase (1279 aa).

The first 35 residues, 1–35 (MYKKLFTKKFISFVMSLLLVLTAAFSSMPFHNVYA), serve as a signal peptide directing secretion. Positions 248, 250, 288, 343, 401, 403, 406, 407, 452, and 454 each coordinate Ca(2+). Residues His527 and Arg627 each contribute to the substrate site. The Nucleophile role is filled by Asp629. Catalysis depends on Glu658, which acts as the Proton donor. Residues 734 to 735 (HD), Asp794, and Arg798 each bind substrate. Fibronectin type-III domains follow at residues 930-1022 (APQV…AYPI) and 1158-1252 (KPTA…VVPI).

The protein belongs to the glycosyl hydrolase 13 family. The cofactor is Ca(2+).

The catalysed reaction is Endohydrolysis of (1-&gt;4)-alpha-D-glucosidic linkages in polysaccharides containing three or more (1-&gt;4)-alpha-linked D-glucose units.. The enzyme catalyses Hydrolysis of (1-&gt;6)-alpha-D-glucosidic linkages in pullulan, amylopectin and glycogen, and in the alpha- and beta-limit dextrins of amylopectin and glycogen.. This is Amylopullulanase (apu) from Thermoanaerobacterium saccharolyticum.